Consider the following 258-residue polypeptide: Apolipoprotein E (258 aa).

A signal peptide spans 1 to 19 (MRVWTVLLGAVLLLAACQA). Tandem repeats lie at residues 112–133 (VDME…QVAG), 134–155 (QNLE…KRLA), and 156–173 (KDTE…KEAT). Positions 112 to 173 (VDMEEAKTRV…KLEAYSKEAT (62 aa)) are 3 X 22 AA approximate tandem repeats.

It belongs to the apolipoprotein A1/A4/E family. Homotetramer.

The protein resides in the secreted. The protein localises to the extracellular space. It is found in the extracellular matrix. Its function is as follows. APOE is an apolipoprotein, a protein associating with lipid particles, that mainly functions in lipoprotein-mediated lipid transport between organs via the plasma and interstitial fluids. APOE is a core component of plasma lipoproteins and is involved in their production, conversion and clearance. Apolipoproteins are amphipathic molecules that interact both with lipids of the lipoprotein particle core and the aqueous environment of the plasma. The protein is Apolipoprotein E (APOE) of Alligator mississippiensis (American alligator).